We begin with the raw amino-acid sequence, 590 residues long: UvrABC system protein C (590 aa).

A GIY-YIG domain is found at 14-91 (DQPGCYLMKD…IKKYDPKYNV (78 aa)). One can recognise a UVR domain in the interval 196–231 (NEVKKELEAKMLEASENLQFERAKEFRDQIAHIEST).

This sequence belongs to the UvrC family. In terms of assembly, interacts with UvrB in an incision complex.

It localises to the cytoplasm. Its function is as follows. The UvrABC repair system catalyzes the recognition and processing of DNA lesions. UvrC both incises the 5' and 3' sides of the lesion. The N-terminal half is responsible for the 3' incision and the C-terminal half is responsible for the 5' incision. This is UvrABC system protein C from Bacillus licheniformis (strain ATCC 14580 / DSM 13 / JCM 2505 / CCUG 7422 / NBRC 12200 / NCIMB 9375 / NCTC 10341 / NRRL NRS-1264 / Gibson 46).